Reading from the N-terminus, the 91-residue chain is Small ribosomal subunit protein bS18 (91 aa).

This sequence belongs to the bacterial ribosomal protein bS18 family. In terms of assembly, part of the 30S ribosomal subunit. Forms a tight heterodimer with protein bS6.

Its function is as follows. Binds as a heterodimer with protein bS6 to the central domain of the 16S rRNA, where it helps stabilize the platform of the 30S subunit. The protein is Small ribosomal subunit protein bS18 of Burkholderia lata (strain ATCC 17760 / DSM 23089 / LMG 22485 / NCIMB 9086 / R18194 / 383).